Reading from the N-terminus, the 1755-residue chain is Transposon Ty1-JR1 Gag-Pol polyprotein (1755 aa).

Residues 1–16 (MESQQLSQHSHISHGS) show a composition bias toward low complexity. Disordered regions lie at residues 1–93 (MESQ…MMTQ), 126–173 (PQSQ…RPPP), and 352–421 (GSRN…SKST). 2 stretches are compositionally biased toward polar residues: residues 48-60 (TKAN…TPAS) and 127-152 (QSQF…GNTF). Over residues 153 to 165 (TDSSSADSDMTST) the composition is skewed to low complexity. Residues 299 to 401 (NNGIHINNKV…NSKSKTARAH (103 aa)) are RNA-binding. Residues 402-418 (NVSTSNNSPSTDNDSIS) show a composition bias toward low complexity. Ser416 carries the phosphoserine modification. The For protease activity; shared with dimeric partner role is filled by Asp461. Residues 583–640 (NVHTSESTRKYPYPFIHRMLAHANAQTIRYSLKNNTITYFNESDVDWSSAIDYQCPDC) form an integrase-type zinc finger-like region. One can recognise an Integrase catalytic domain in the interval 660–835 (NSYEPFQYLH…AGLDISTLLP (176 aa)). Mg(2+) contacts are provided by Asp671 and Asp736. Disordered stretches follow at residues 956–1087 (SKAV…ETEK), 1092–1111 (RSPS…NIVP), and 1130–1186 (DLPL…EDNE). The segment covering 960–969 (SPTDSTPPST) has biased composition (low complexity). A compositionally biased stretch (polar residues) spans 1005-1015 (STPQISNIEST). The span at 1038-1053 (ESSHASKSKDFRHSDS) shows a compositional bias: basic and acidic residues. 2 stretches are compositionally biased toward polar residues: residues 1054–1082 (YSEN…QISD) and 1101–1111 (PENNSSHNIVP). Positions 1178–1212 (KKRSLEDNETEIKVSRDTWNTKNMRSLEPPRSKKR) match the Bipartite nuclear localization signal motif. In terms of domain architecture, Reverse transcriptase Ty1/copia-type spans 1338–1476 (NNYYITQLDI…DILGLEIKYQ (139 aa)). Asp1346, Asp1427, Asp1428, Asp1610, Glu1652, and Asp1685 together coordinate Mg(2+). One can recognise an RNase H Ty1/copia-type domain in the interval 1610–1752 (DASYGNQPYY…IKTFKLLTNK (143 aa)).

In terms of assembly, the capsid protein forms a homotrimer, from which the VLPs are assembled. The protease is a homodimer, whose active site consists of two apposed aspartic acid residues. Post-translationally, initially, virus-like particles (VLPs) are composed of the structural unprocessed proteins Gag and Gag-Pol, and also contain the host initiator methionine tRNA (tRNA(i)-Met) which serves as a primer for minus-strand DNA synthesis, and a dimer of genomic Ty RNA. Processing of the polyproteins occurs within the particle and proceeds by an ordered pathway, called maturation. First, the protease (PR) is released by autocatalytic cleavage of the Gag-Pol polyprotein yielding capsid protein p45 and a Pol-p154 precursor protein. This cleavage is a prerequisite for subsequent processing of Pol-p154 at the remaining sites to release the mature structural and catalytic proteins. Maturation takes place prior to the RT reaction and is required to produce transposition-competent VLPs.

It localises to the cytoplasm. It is found in the nucleus. It carries out the reaction DNA(n) + a 2'-deoxyribonucleoside 5'-triphosphate = DNA(n+1) + diphosphate. It catalyses the reaction Endonucleolytic cleavage to 5'-phosphomonoester.. Its function is as follows. Capsid protein (CA) is the structural component of the virus-like particle (VLP), forming the shell that encapsulates the retrotransposons dimeric RNA genome. The particles are assembled from trimer-clustered units and there are holes in the capsid shells that allow for the diffusion of macromolecules. CA also has nucleocapsid-like chaperone activity, promoting primer tRNA(i)-Met annealing to the multipartite primer-binding site (PBS), dimerization of Ty1 RNA and initiation of reverse transcription. Functionally, the aspartyl protease (PR) mediates the proteolytic cleavages of the Gag and Gag-Pol polyproteins after assembly of the VLP. Reverse transcriptase/ribonuclease H (RT) is a multifunctional enzyme that catalyzes the conversion of the retro-elements RNA genome into dsDNA within the VLP. The enzyme displays a DNA polymerase activity that can copy either DNA or RNA templates, and a ribonuclease H (RNase H) activity that cleaves the RNA strand of RNA-DNA heteroduplexes during plus-strand synthesis and hydrolyzes RNA primers. The conversion leads to a linear dsDNA copy of the retrotransposon that includes long terminal repeats (LTRs) at both ends. In terms of biological role, integrase (IN) targets the VLP to the nucleus, where a subparticle preintegration complex (PIC) containing at least integrase and the newly synthesized dsDNA copy of the retrotransposon must transit the nuclear membrane. Once in the nucleus, integrase performs the integration of the dsDNA into the host genome. The chain is Transposon Ty1-JR1 Gag-Pol polyprotein (TY1B-JR1) from Saccharomyces cerevisiae (strain ATCC 204508 / S288c) (Baker's yeast).